A 485-amino-acid polypeptide reads, in one-letter code: Katanin p60 ATPase-containing subunit A1 (485 aa).

The segment at 101-173 is disordered; that stretch reads HRSSPCVVRK…KNKAEAVETE (73 aa). Residues 141-173 show a composition bias toward basic and acidic residues; the sequence is NGDKGKPQKSKEKKENPSKPKEDKNKAEAVETE. 244–251 contributes to the ATP binding site; that stretch reads GPPGTGKT.

It belongs to the AAA ATPase family. Katanin p60 subunit A1 subfamily. Can homooligomerize into hexameric rings, which may be promoted by interaction with microtubules. Interacts with katnb1, which may serve as a targeting subunit.

It is found in the cytoplasm. The protein localises to the cytoskeleton. It localises to the microtubule organizing center. The protein resides in the centrosome. Its subcellular location is the spindle pole. It is found in the spindle. The catalysed reaction is n ATP + n H2O + a microtubule = n ADP + n phosphate + (n+1) alpha/beta tubulin heterodimers.. With respect to regulation, ATPase activity is stimulated by microtubules, which promote homooligomerization. ATP-dependent microtubule severing is stimulated by interaction with katnb1. Catalytic subunit of a complex which severs microtubules in an ATP-dependent manner. Microtubule severing may promote rapid reorganization of cellular microtubule arrays and the release of microtubules from the centrosome following nucleation. This is Katanin p60 ATPase-containing subunit A1 (katna1) from Danio rerio (Zebrafish).